The sequence spans 160 residues: Endoribonuclease YbeY (160 aa).

Zn(2+) is bound by residues His-124, His-128, and His-134.

It belongs to the endoribonuclease YbeY family. The cofactor is Zn(2+).

It localises to the cytoplasm. Functionally, single strand-specific metallo-endoribonuclease involved in late-stage 70S ribosome quality control and in maturation of the 3' terminus of the 16S rRNA. This Jannaschia sp. (strain CCS1) protein is Endoribonuclease YbeY.